We begin with the raw amino-acid sequence, 295 residues long: Dehydrodolichyl diphosphate synthase 6 (295 aa).

The protein belongs to the UPP synthase family. It depends on Mg(2+) as a cofactor.

It participates in protein modification; protein glycosylation. In terms of biological role, catalyzes cis-prenyl chain elongation to produce the polyprenyl backbone of dolichol, a glycosyl carrier-lipid required for the biosynthesis of several classes of glycoprotein. This is Dehydrodolichyl diphosphate synthase 6 from Arabidopsis thaliana (Mouse-ear cress).